Reading from the N-terminus, the 155-residue chain is Putative ATP synthase protein YMF19-like protein (155 aa).

3 helical membrane-spanning segments follow: residues 23–43 (FLWL…VLVF), 89–109 (WRAL…LGSF), and 117–137 (VDFG…LFFF).

It belongs to the ATPase protein YMF19 family.

The protein localises to the mitochondrion membrane. This Marchantia polymorpha (Common liverwort) protein is Putative ATP synthase protein YMF19-like protein (YMF18).